The following is a 570-amino-acid chain: Urease subunit alpha (570 aa).

The Ni(2+) site is built by histidine 137, histidine 139, and lysine 220. Residue lysine 220 is modified to N6-carboxylysine. Substrate is bound at residue histidine 222. Residues histidine 249 and histidine 275 each contribute to the Ni(2+) site. The active-site Proton donor is histidine 323. Aspartate 363 contributes to the Ni(2+) binding site.

It belongs to the metallo-dependent hydrolases superfamily. Urease alpha subunit family. Heterotrimer of UreA (gamma), UreB (beta) and UreC (alpha) subunits. Three heterotrimers associate to form the active enzyme. Ni cation serves as cofactor. In terms of processing, carboxylation allows a single lysine to coordinate two nickel ions.

It is found in the cytoplasm. It catalyses the reaction urea + 2 H2O + H(+) = hydrogencarbonate + 2 NH4(+). It participates in nitrogen metabolism; urea degradation; CO(2) and NH(3) from urea (urease route): step 1/1. This is Urease subunit alpha from Lachnoclostridium phytofermentans (strain ATCC 700394 / DSM 18823 / ISDg) (Clostridium phytofermentans).